Reading from the N-terminus, the 366-residue chain is 3-dehydroquinate synthase (366 aa).

NAD(+)-binding positions include 107–111 (GVIGD), 131–132 (TS), lysine 144, and lysine 153. The Zn(2+) site is built by glutamate 186, histidine 251, and histidine 268.

It belongs to the sugar phosphate cyclases superfamily. Dehydroquinate synthase family. The cofactor is Co(2+). Zn(2+) serves as cofactor. Requires NAD(+) as cofactor.

The protein resides in the cytoplasm. It catalyses the reaction 7-phospho-2-dehydro-3-deoxy-D-arabino-heptonate = 3-dehydroquinate + phosphate. It participates in metabolic intermediate biosynthesis; chorismate biosynthesis; chorismate from D-erythrose 4-phosphate and phosphoenolpyruvate: step 2/7. In terms of biological role, catalyzes the conversion of 3-deoxy-D-arabino-heptulosonate 7-phosphate (DAHP) to dehydroquinate (DHQ). This Rippkaea orientalis (strain PCC 8801 / RF-1) (Cyanothece sp. (strain PCC 8801)) protein is 3-dehydroquinate synthase.